Here is a 300-residue protein sequence, read N- to C-terminus: tRNA pseudouridine synthase B (300 aa).

Asp-41 acts as the Nucleophile in catalysis.

Belongs to the pseudouridine synthase TruB family. Type 1 subfamily.

The catalysed reaction is uridine(55) in tRNA = pseudouridine(55) in tRNA. Responsible for synthesis of pseudouridine from uracil-55 in the psi GC loop of transfer RNAs. This is tRNA pseudouridine synthase B from Synechococcus sp. (strain WH7803).